The sequence spans 948 residues: Bifunctional uridylyltransferase/uridylyl-removing enzyme (948 aa).

The uridylyltransferase stretch occupies residues M1–P372. A uridylyl-removing region spans residues G373–T728. Residues V489–L605 enclose the HD domain. ACT domains follow at residues E729–A810 and V840–P921.

This sequence belongs to the GlnD family. Mg(2+) is required as a cofactor.

It catalyses the reaction [protein-PII]-L-tyrosine + UTP = [protein-PII]-uridylyl-L-tyrosine + diphosphate. The enzyme catalyses [protein-PII]-uridylyl-L-tyrosine + H2O = [protein-PII]-L-tyrosine + UMP + H(+). Uridylyltransferase (UTase) activity is inhibited by glutamine, while glutamine activates uridylyl-removing (UR) activity. Functionally, modifies, by uridylylation and deuridylylation, the PII regulatory proteins (GlnB and homologs), in response to the nitrogen status of the cell that GlnD senses through the glutamine level. Under low glutamine levels, catalyzes the conversion of the PII proteins and UTP to PII-UMP and PPi, while under higher glutamine levels, GlnD hydrolyzes PII-UMP to PII and UMP (deuridylylation). Thus, controls uridylylation state and activity of the PII proteins, and plays an important role in the regulation of nitrogen fixation and metabolism. The protein is Bifunctional uridylyltransferase/uridylyl-removing enzyme of Rhizobium tropici.